Reading from the N-terminus, the 53-residue chain is UPF0391 membrane protein Bcen2424_6479 (53 aa).

A run of 2 helical transmembrane segments spans residues 5–25 and 30–50; these read AIIF…GIAA and IAKI…LLGV.

It belongs to the UPF0391 family.

The protein resides in the cell membrane. This is UPF0391 membrane protein Bcen2424_6479 from Burkholderia cenocepacia (strain HI2424).